A 1531-amino-acid polypeptide reads, in one-letter code: Multidrug resistance-associated protein 1 (1531 aa).

Over 1-33 the chain is Extracellular; the sequence is MALRGFCSADGSDPLWDWNVTWNTSNPDFTKCF. 2 N-linked (GlcNAc...) asparagine glycosylation sites follow: asparagine 19 and asparagine 23. The helical transmembrane segment at 34–54 threads the bilayer; it reads QNTVLVWVPCFYLWACFPFYF. At 55-74 the chain is on the cytoplasmic side; it reads LYLSRHDRGYIQMTPLNKTK. A helical transmembrane segment spans residues 75 to 95; sequence TALGFLLWIVCWADLFYSFWE. Topologically, residues 96-100 are extracellular; that stretch reads RSRGI. The helical transmembrane segment at 101–121 threads the bilayer; sequence FLAPVFLVSPTLLGITMLLAT. The Cytoplasmic segment spans residues 122 to 133; that stretch reads FLIQLERRKGVQ. A helical transmembrane segment spans residues 134–154; sequence SSGIMLTFWLVALVCALAILR. The Extracellular segment spans residues 155 to 172; sequence SKIMTALKEDAQVDLFRD. A helical membrane pass occupies residues 173–193; sequence ITFYVYFSLLLIQLVLSCFSD. Residues 194 to 316 lie on the Cytoplasmic side of the membrane; that stretch reads RSPLFSETIH…KEWNPSLFKV (123 aa). At tyrosine 277 the chain carries Phosphotyrosine. Serine 289 carries the phosphoserine modification. Residues 317 to 337 form a helical membrane-spanning segment; that stretch reads LYKTFGPYFLMSFFFKAIHDL. Residues 325 to 608 enclose the ABC transmembrane type-1 1 domain; it reads FLMSFFFKAI…LPMVISSIVQ (284 aa). Residues 338–363 lie on the Extracellular side of the membrane; the sequence is MMFSGPQILKLLIKFVNDTKAPDWQG. The helical transmembrane segment at 364-384 threads the bilayer; sequence YFYTVLLFVTACLQTLVLHQY. Topologically, residues 385–440 are cytoplasmic; that stretch reads FHICFVSGMRIKTAVIGAVYRKALVITNSARKSSTVGEIVNLMSVDAQRFMDLATY. The helical transmembrane segment at 441 to 461 threads the bilayer; it reads INMIWSAPLQVILALYLLWLN. Residues 462–464 are Extracellular-facing; that stretch reads LGP. The helical transmembrane segment at 465 to 485 threads the bilayer; that stretch reads SVLAGVAVMVLMVPVNAVMAM. Over 486–547 the chain is Cytoplasmic; that stretch reads KTKTYQVAHM…VLKKSAYLSA (62 aa). Lysine 503 carries the post-translational modification N6-succinyllysine. The chain crosses the membrane as a helical span at residues 548–568; it reads VGTFTWVCTPFLVALCTFAVY. Over 569–590 the chain is Extracellular; it reads VTIDENNILDAQTAFVSLALFN. A helical membrane pass occupies residues 591 to 611; sequence ILRFPLNILPMVISSIVQASV. Over 612–967 the chain is Cytoplasmic; it reads SLKRLRIFLS…VKLSVYWDYM (356 aa). In terms of domain architecture, ABC transporter 1 spans 644 to 868; sequence ITVRNATFTW…DGAFAEFLRT (225 aa). Residues tryptophan 653, 678–685, and glutamine 713 each bind ATP; that span reads GQVGCGKS. Phosphoserine is present on residues serine 905, serine 915, and serine 930. Residues 968–988 traverse the membrane as a helical segment; that stretch reads KAIGLFISFLSIFLFMCNHVS. Residues 975-1256 form the ABC transmembrane type-1 2 domain; the sequence is SFLSIFLFMC…LVRMSSEMET (282 aa). At 989–1025 the chain is on the extracellular side; sequence ALASNYWLSLWTDDPIVNGTQEHTKVRLSVYGALGIS. A glycan (N-linked (GlcNAc...) asparagine) is linked at asparagine 1006. A helical transmembrane segment spans residues 1026–1046; it reads QGIAVFGYSMAVSIGGILASR. At 1047–1089 the chain is on the cytoplasmic side; sequence CLHVDLLHSILRSPMSFFERTPSGNLVNRFSKELDTVDSMIPE. The helical transmembrane segment at 1090–1110 threads the bilayer; sequence VIKMFMGSLFNVIGACIVILL. Residue alanine 1111 is a topological domain, extracellular. The chain crosses the membrane as a helical span at residues 1112–1132; it reads TPIAAIIIPPLGLIYFFVQRF. Residues 1133 to 1203 lie on the Cytoplasmic side of the membrane; that stretch reads YVASSRQLKR…VANRWLAVRL (71 aa). A helical membrane pass occupies residues 1204–1224; sequence ECVGNCIVLFAALFAVISRHS. The Extracellular portion of the chain corresponds to 1225 to 1226; sequence LS. A helical membrane pass occupies residues 1227 to 1247; sequence AGLVGLSVSYSLQVTTYLNWL. The Cytoplasmic segment spans residues 1248–1531; sequence VRMSSEMETN…YSMAKDAGLV (284 aa). The 235-residue stretch at 1293 to 1527 folds into the ABC transporter 2 domain; it reads VEFRNYCLRY…RGLFYSMAKD (235 aa). An ATP-binding site is contributed by 1327–1334; it reads GRTGAGKS.

It belongs to the ABC transporter superfamily. ABCC family. Conjugate transporter (TC 3.A.1.208) subfamily. (Microbial infection) Interacts with human cytomegalovirus protein UL138; this interaction mediates MRP1 degradation via the lysosome. In terms of tissue distribution, lung, testis and peripheral blood mononuclear cells.

It is found in the cell membrane. The protein localises to the basolateral cell membrane. The enzyme catalyses ATP + H2O + xenobioticSide 1 = ADP + phosphate + xenobioticSide 2.. The catalysed reaction is an S-substituted glutathione(in) + ATP + H2O = an S-substituted glutathione(out) + ADP + phosphate + H(+). It carries out the reaction sphing-4-enine 1-phosphate(in) + ATP + H2O = sphing-4-enine 1-phosphate(out) + ADP + phosphate + H(+). It catalyses the reaction leukotriene C4(in) + ATP + H2O = leukotriene C4(out) + ADP + phosphate + H(+). The enzyme catalyses 17beta-estradiol 17-O-(beta-D-glucuronate)(in) + ATP + H2O = 17beta-estradiol 17-O-(beta-D-glucuronate)(out) + ADP + phosphate + H(+). The catalysed reaction is daunorubicin(in) + ATP + H2O = daunorubicin(out) + ADP + phosphate + H(+). It carries out the reaction vincristine(in) + ATP + H2O = vincristine(out) + ADP + phosphate + H(+). It catalyses the reaction 2',3'-cGAMP(in) + ATP + H2O = 2',3'-cGAMP(out) + ADP + phosphate + H(+). The enzyme catalyses S-[(2E,6E,10E)-geranylgeranyl]-L-glutathione(in) + ATP + H2O = S-[(2E,6E,10E)-geranylgeranyl]-L-glutathione(out) + ADP + phosphate + H(+). The catalysed reaction is prostaglandin A2-S-(R)-glutathione(in) + ATP + H2O = prostaglandin A2-S-(R)-glutathione(out) + ADP + phosphate + H(+). It carries out the reaction prostaglandin A2-S-(S)-glutathione(in) + ATP + H2O = prostaglandin A2-S-(S)-glutathione(out) + ADP + phosphate + H(+). MK 571 inhibits sphingosine 1-phosphate and leukotriene C4 export. Mediates export of organic anions and drugs from the cytoplasm. Mediates ATP-dependent transport of glutathione and glutathione conjugates, leukotriene C4, estradiol-17-beta-o-glucuronide, methotrexate, antiviral drugs and other xenobiotics. Confers resistance to anticancer drugs by decreasing accumulation of drug in cells, and by mediating ATP- and GSH-dependent drug export. Hydrolyzes ATP with low efficiency. Catalyzes the export of sphingosine 1-phosphate from mast cells independently of their degranulation. Participates in inflammatory response by allowing export of leukotriene C4 from leukotriene C4-synthesizing cells. Mediates ATP-dependent, GSH-independent cyclic GMP-AMP (cGAMP) export. Thus, by limiting intracellular cGAMP concentrations negatively regulates the cGAS-STING pathway. Exports S-geranylgeranyl-glutathione (GGG) in lymphoid cells and stromal compartments of lymphoid organs. ABCC1 (via extracellular transport) with GGT5 (via GGG catabolism) establish GGG gradients within lymphoid tissues to position P2RY8-positive lymphocytes at germinal centers in lymphoid follicles and restrict their chemotactic transmigration from blood vessels to the bone marrow parenchyma. Mediates basolateral export of GSH-conjugated R- and S-prostaglandin A2 diastereomers in polarized epithelial cells. The chain is Multidrug resistance-associated protein 1 from Homo sapiens (Human).